The following is a 269-amino-acid chain: MDKKEKRPTVLFFDSGVGGFSVYREAKKLLPNWHYLYCFDNAGFPYSEREEESIIHRTLAACQLINQRYPLDAIVIACNTASTVVLPPLRAAFEIPIIGTVPAIKPASEITKTKHIGLLATKGTVKRHYIDELIDKFAQDCIVERLGTTKLVEIAEQKIRGHSVDLISLKDELSSWAGMADLDTLVLGCTHFPLIKDEIQLCLPQVKYFMDPSAAIAKRIKYLLDDKNLQVQNEKYNQMFCTAHFPEESQFKKALHLWGFESLEVIKID.

Residues 14 to 15 (DS) and 46 to 47 (YS) contribute to the substrate site. The active-site Proton donor/acceptor is cysteine 78. 79–80 (NT) lines the substrate pocket. Catalysis depends on cysteine 189, which acts as the Proton donor/acceptor. 190–191 (TH) serves as a coordination point for substrate.

This sequence belongs to the aspartate/glutamate racemases family.

The enzyme catalyses L-glutamate = D-glutamate. The protein operates within cell wall biogenesis; peptidoglycan biosynthesis. Provides the (R)-glutamate required for cell wall biosynthesis. This chain is Glutamate racemase, found in Haemophilus influenzae (strain 86-028NP).